The primary structure comprises 495 residues: 2-carboxy-D-arabinitol-1-phosphatase (495 aa).

The segment covering 1 to 12 (MLLFAPTPPPSP) has biased composition (pro residues). The interval 1–23 (MLLFAPTPPPSPATAHRRPGGSA) is disordered. A chloroplast-targeting transit peptide spans 1–50 (MLLFAPTPPPSPATAHRRPGGSAASCIRCSSVRELDRSPSRPPLPPLAEA). The active-site Tele-phosphohistidine intermediate is His-58. The Proton donor/acceptor role is filled by Glu-132.

Belongs to the phosphoglycerate mutase family.

Its subcellular location is the plastid. The protein resides in the chloroplast stroma. The enzyme catalyses 2-carboxy-D-arabinitol 1-phosphate + H2O = 2-carboxy-D-arabinitol + phosphate. Inactivated by oxidized glutathione (GSSG) at pH 8.0. Phosphoglycerate mutase-like protein lacking PGM activity, but having 2-carboxy-D-arabinitol 1-phosphate (CA1P) phosphatase activity. Can dephosphorylate the closely related compounds 2-carboxy-D-arabinitol 1,5-bisphosphate (CABP) and 2-carboxy-D-ribitol-1,5-bisphosphate(CRBP), and 2,3-diphosphoglycerate. Prevents the accumulation of D-glycero-2,3-pentodiulose-1,5-bisphosphate (PDBP) a potent inhibitor of ribulose-1,5-bisphosphate carboxylase (RuBisCO). PDBP is produced during the oxidation of ribulose-1,5-bisphosphate, the substrate of RuBisCO. This is 2-carboxy-D-arabinitol-1-phosphatase from Triticum aestivum (Wheat).